Reading from the N-terminus, the 354-residue chain is Probable cinnamyl alcohol dehydrogenase 1 (354 aa).

Cysteine 47 contacts Zn(2+). An NADP(+)-binding site is contributed by serine 49. Residues histidine 69, glutamate 70, cysteine 100, cysteine 103, cysteine 106, cysteine 114, and cysteine 163 each coordinate Zn(2+). NADP(+) is bound by residues threonine 167, glycine 188–glycine 193, serine 211–lysine 216, threonine 251, glycine 275, and serine 296–isoleucine 298.

The protein belongs to the zinc-containing alcohol dehydrogenase family. As to quaternary structure, homodimer. Requires Zn(2+) as cofactor.

The catalysed reaction is (E)-cinnamyl alcohol + NADP(+) = (E)-cinnamaldehyde + NADPH + H(+). It catalyses the reaction (E)-coniferol + NADP(+) = (E)-coniferaldehyde + NADPH + H(+). It carries out the reaction (E)-sinapyl alcohol + NADP(+) = (E)-sinapaldehyde + NADPH + H(+). The enzyme catalyses (E)-4-coumaroyl alcohol + NADP(+) = (E)-4-coumaraldehyde + NADPH + H(+). The catalysed reaction is (E)-caffeyl alcohol + NADP(+) = (E)-caffeyl aldehyde + NADPH + H(+). Its pathway is aromatic compound metabolism; phenylpropanoid biosynthesis. Its function is as follows. Involved in lignin biosynthesis. Catalyzes the final step specific for the production of lignin monomers. Catalyzes the NADPH-dependent reduction of coniferaldehyde, 5-hydroxyconiferaldehyde, sinapaldehyde, 4-coumaraldehyde and caffeyl aldehyde to their respective alcohols. The polypeptide is Probable cinnamyl alcohol dehydrogenase 1 (CAD1) (Eucalyptus gunnii (Cider gum)).